The primary structure comprises 75 residues: UPF0346 protein LJ_1103 (75 aa).

The protein belongs to the UPF0346 family.

In Lactobacillus johnsonii (strain CNCM I-12250 / La1 / NCC 533), this protein is UPF0346 protein LJ_1103.